Reading from the N-terminus, the 107-residue chain is Late histone H2B.L4 (107 aa).

O-linked (GlcNAc) serine glycosylation occurs at Ser94. Residue Lys102 forms a Glycyl lysine isopeptide (Lys-Gly) (interchain with G-Cter in ubiquitin) linkage.

The protein belongs to the histone H2B family. In terms of assembly, the nucleosome is a histone octamer containing two molecules each of H2A, H2B, H3 and H4 assembled in one H3-H4 heterotetramer and two H2A-H2B heterodimers. The octamer wraps approximately 147 bp of DNA. Post-translationally, monoubiquitination gives a specific tag for epigenetic transcriptional activation and is also prerequisite for histone H3 'Lys-4' and 'Lys-79' methylation. In terms of processing, glcNAcylation at Ser-94 promotes monoubiquitination of Lys-102. It fluctuates in response to extracellular glucose, and associates with transcribed genes.

It localises to the nucleus. The protein localises to the chromosome. Core component of nucleosome. Nucleosomes wrap and compact DNA into chromatin, limiting DNA accessibility to the cellular machineries which require DNA as a template. Histones thereby play a central role in transcription regulation, DNA repair, DNA replication and chromosomal stability. DNA accessibility is regulated via a complex set of post-translational modifications of histones, also called histone code, and nucleosome remodeling. The polypeptide is Late histone H2B.L4 (Strongylocentrotus purpuratus (Purple sea urchin)).